A 161-amino-acid polypeptide reads, in one-letter code: Endoribonuclease YbeY (161 aa).

Residues His121, His125, and His131 each coordinate Zn(2+).

This sequence belongs to the endoribonuclease YbeY family. The cofactor is Zn(2+).

The protein resides in the cytoplasm. Single strand-specific metallo-endoribonuclease involved in late-stage 70S ribosome quality control and in maturation of the 3' terminus of the 16S rRNA. This Stenotrophomonas maltophilia (strain R551-3) protein is Endoribonuclease YbeY.